We begin with the raw amino-acid sequence, 130 residues long: Small ribosomal subunit protein uS11 (130 aa).

This sequence belongs to the universal ribosomal protein uS11 family. In terms of assembly, part of the 30S ribosomal subunit. Interacts with proteins S7 and S18. Binds to IF-3.

Functionally, located on the platform of the 30S subunit, it bridges several disparate RNA helices of the 16S rRNA. Forms part of the Shine-Dalgarno cleft in the 70S ribosome. The sequence is that of Small ribosomal subunit protein uS11 from Dehalococcoides mccartyi (strain ATCC BAA-2266 / KCTC 15142 / 195) (Dehalococcoides ethenogenes (strain 195)).